A 194-amino-acid polypeptide reads, in one-letter code: dTTP/UTP pyrophosphatase (194 aa).

Catalysis depends on D73, which acts as the Proton acceptor.

The protein belongs to the Maf family. YhdE subfamily. A divalent metal cation serves as cofactor.

It is found in the cytoplasm. It carries out the reaction dTTP + H2O = dTMP + diphosphate + H(+). The catalysed reaction is UTP + H2O = UMP + diphosphate + H(+). Its function is as follows. Nucleoside triphosphate pyrophosphatase that hydrolyzes dTTP and UTP. May have a dual role in cell division arrest and in preventing the incorporation of modified nucleotides into cellular nucleic acids. The chain is dTTP/UTP pyrophosphatase from Clostridium botulinum (strain ATCC 19397 / Type A).